Reading from the N-terminus, the 131-residue chain is C-type natriuretic peptide 1 (131 aa).

A signal peptide spans 1–22 (MLCPVLLCATLLLLTPFEVTEA). The propeptide occupies 23–109 (RALHPSADAV…KRAEPDRSRR (87 aa)). C115 and C131 form a disulfide bridge.

Belongs to the natriuretic peptide family. As to expression, brain and spinal cord.

Its subcellular location is the secreted. Exhibits natriuretic and vasodepressant activity. Has cGMP-stimulating activity. May help to regulate body fluid homeostasis in a variety of aquatic environments. This chain is C-type natriuretic peptide 1, found in Oryzias latipes (Japanese rice fish).